The following is a 1090-amino-acid chain: Leucine-rich repeat receptor-like serine/threonine-protein kinase RGI4 (1090 aa).

An N-terminal signal peptide occupies residues 1–20 (MPRNPRFCFFLFLLFHSSLF). The Extracellular segment spans residues 21–702 (FSIPCFSIDE…IQTRHRSAVK (682 aa)). The stretch at 36-59 (LSWKSQLNISGDALSSWKASESNP) is one LRR 1 repeat. Asn-43 carries an N-linked (GlcNAc...) asparagine glycan. A disulfide bridge connects residues Cys-60 and Cys-67. LRR repeat units lie at residues 95-119 (IKSL…LGDL), 120-143 (SELE…IFKL), 145-166 (KLKI…ELGN), and 168-191 (VNLI…IGEL). N-linked (GlcNAc...) asparagine glycosylation is present at Asn-107. Short sequence motifs (small peptide recognition) lie at residues 176–177 (FD), 198–201 (RAGG), 221–226 (TLGLAE), and Tyr-249. LRR repeat units lie at residues 216–240 (CESL…IGNL), 242–264 (KVQT…IGNC), 265–288 (TELQ…MGRL), 289–312 (KKLQ…LGTC), 314–335 (ELFL…SFGN), 336–360 (LPNL…LANC), and 362–386 (KLTH…KLTS). Asn-263 carries N-linked (GlcNAc...) asparagine glycosylation. The short motif at 269–273 (NLYLY) is the CLE45 peptide binding element. The Small peptide recognition motif lies at 271-273 (YLY). Short sequence motifs (small peptide recognition) lie at residues 319 to 322 (DLSE) and 341 to 343 (ELQ). A glycan (N-linked (GlcNAc...) asparagine) is linked at Asn-359. 2 consecutive short sequence motifs (small peptide recognition) follow at residues 389-393 (MFFAW) and 415-418 (DLSY). LRR repeat units follow at residues 408 to 432 (CQEL…IFEI), 434 to 456 (NLTK…IGNC), 457 to 480 (TNLY…IGNL), 481 to 504 (KNLN…ISGC), 506 to 526 (SLEF…GTLP), 527 to 550 (KSLQ…IGSL), 551 to 574 (TELT…ISSC), 576 to 598 (SLQL…LGRI), 600 to 622 (SLAI…RFSS), 623 to 646 (LTNL…LADL), and 647 to 670 (QNLV…LFFR). N-linked (GlcNAc...) asparagine glycosylation is found at Asn-420 and Asn-434. The Small peptide recognition motif lies at 437–441 (KLLLL). N-linked (GlcNAc...) asparagine glycosylation occurs at Asn-455. The Small peptide recognition signature appears at 461 to 463 (RLR). Residue Asn-606 is glycosylated (N-linked (GlcNAc...) asparagine). Asn-653 carries N-linked (GlcNAc...) asparagine glycosylation. Residues 703–723 (VTMSILVAASVVLVLMAVYTL) traverse the membrane as a helical segment. The Cytoplasmic portion of the chain corresponds to 724–1090 (VKAQRITGKQ…CSFAYSDESV (367 aa)). In terms of domain architecture, Protein kinase spans 758-1040 (LTSANVIGTG…KDIVAMLKEI (283 aa)). ATP is bound by residues 764–772 (IGTGSSGVV) and Lys-786. Phosphotyrosine is present on residues Tyr-829 and Tyr-869. Catalysis depends on Asp-882, which acts as the Proton acceptor. Tyr-932 is modified (phosphotyrosine). The stretch at 1037-1060 (LKEIRQFDMDRSESDMIKGGKCEK) is one LRR 24 repeat. The tract at residues 1054-1079 (KGGKCEKWQPQPLPPEKIVSTPRGSS) is disordered.

Belongs to the protein kinase superfamily. Ser/Thr protein kinase family. As to quaternary structure, self-interacts. Interacts with RGF1; this interaction triggers its phosphorylation and ubiquitination and the formation of heterodimers with SERK1. Post-translationally, autophosphorylated. Phosphorylated and ubiquitinated upon interaction with RGF1, thus leading to activation a subsequent degradation. Expressed in floers, pollen grains and stipules. Present in roots.

The protein localises to the cell membrane. It carries out the reaction L-seryl-[protein] + ATP = O-phospho-L-seryl-[protein] + ADP + H(+). The catalysed reaction is L-threonyl-[protein] + ATP = O-phospho-L-threonyl-[protein] + ADP + H(+). Receptor with a serine/threonine-protein kinase activity. Together with SKM1, LRR-rich receptor-like kinase (LRR-RLK) required for male fertility by the perception of CLE43 and CLE45 peptides and the transduction of their promoting action in pollen tubes, especially under relatively high temperature (at 30 degrees Celsius), thus conferring tolerance against high temperature probably through the maintenance of mitochondrial activity. Seems to not be involved in the perception of CLE45 peptide in roots. Together with RGI1, RGI2, RGI3, RGI4 and RGI5, acts as receptor of RGF1, a peptide hormone that maintains the postembryonic root stem cell niche by regulating the expression levels and patterns of the transcription factor PLETHORA (PLT). Links RGF1 signal with its downstream components. This is Leucine-rich repeat receptor-like serine/threonine-protein kinase RGI4 from Arabidopsis thaliana (Mouse-ear cress).